The chain runs to 512 residues: UDP-N-acetylmuramate--L-alanine ligase (512 aa).

Residue 132–138 (GAHGKTT) participates in ATP binding.

The protein belongs to the MurCDEF family.

It localises to the cytoplasm. The enzyme catalyses UDP-N-acetyl-alpha-D-muramate + L-alanine + ATP = UDP-N-acetyl-alpha-D-muramoyl-L-alanine + ADP + phosphate + H(+). It participates in cell wall biogenesis; peptidoglycan biosynthesis. In terms of biological role, cell wall formation. The sequence is that of UDP-N-acetylmuramate--L-alanine ligase from Bifidobacterium longum (strain DJO10A).